The sequence spans 430 residues: Arrestin-related trafficking adapter 10 (430 aa).

The disordered stretch occupies residues 55-75 (AEADRHSSRLPQDPQTQYTKE). Residues 63–72 (RLPQDPQTQY) are compositionally biased toward polar residues.

It belongs to the ART10 family.

The protein resides in the cytoplasm. Functionally, may regulate endocytosis by recruiting RSP5 ubiquitin ligase activity to specific plasma membrane proteins in response to extracellular stimuli. The polypeptide is Arrestin-related trafficking adapter 10 (ART10) (Eremothecium gossypii (strain ATCC 10895 / CBS 109.51 / FGSC 9923 / NRRL Y-1056) (Yeast)).